The following is a 374-amino-acid chain: Amino acid binding protein (374 aa).

Positions 1–27 (MSKKLFRKGILALAVSSVMGLSTHALA) are cleaved as a signal peptide.

The protein belongs to the leucine-binding protein family.

It is found in the periplasm. Binds primarily proteinogenic amino acids. This is Amino acid binding protein from Pseudomonas aeruginosa (strain ATCC 15692 / DSM 22644 / CIP 104116 / JCM 14847 / LMG 12228 / 1C / PRS 101 / PAO1).